A 437-amino-acid polypeptide reads, in one-letter code: GTPase Der (437 aa).

EngA-type G domains follow at residues 4 to 167 and 176 to 351; these read PVIA…PEDE and IRIS…ENHN. GTP-binding positions include 10-17, 57-61, 119-122, 182-189, 229-233, and 294-297; these read GRPNVGKS, DTGGI, NKID, DTAGM, and NKWD. The region spanning 352–436 is the KH-like domain; the sequence is LRVPTHVLND…PIKIIARKKN (85 aa).

This sequence belongs to the TRAFAC class TrmE-Era-EngA-EngB-Septin-like GTPase superfamily. EngA (Der) GTPase family. As to quaternary structure, associates with the 50S ribosomal subunit.

Its function is as follows. GTPase that plays an essential role in the late steps of ribosome biogenesis. The chain is GTPase Der from Halalkalibacterium halodurans (strain ATCC BAA-125 / DSM 18197 / FERM 7344 / JCM 9153 / C-125) (Bacillus halodurans).